Here is a 299-residue protein sequence, read N- to C-terminus: Probable tyrosine phosphatase protein J4 (299 aa).

A Tyrosine-protein phosphatase domain is found at 16-289 (VEALDFLSFM…VYCYQALYVW (274 aa)). Catalysis depends on Cys-230, which acts as the Phosphocysteine intermediate.

It belongs to the protein-tyrosine phosphatase family.

It catalyses the reaction O-phospho-L-tyrosyl-[protein] + H2O = L-tyrosyl-[protein] + phosphate. This is Probable tyrosine phosphatase protein J4 (J5) from Microplitis demolitor bracovirus (isolate Webb) (MdBV).